Reading from the N-terminus, the 249-residue chain is 5'-nucleotidase SurE (249 aa).

A divalent metal cation contacts are provided by aspartate 8, aspartate 9, serine 39, and asparagine 91.

Belongs to the SurE nucleotidase family. A divalent metal cation serves as cofactor.

Its subcellular location is the cytoplasm. It catalyses the reaction a ribonucleoside 5'-phosphate + H2O = a ribonucleoside + phosphate. Functionally, nucleotidase that shows phosphatase activity on nucleoside 5'-monophosphates. The polypeptide is 5'-nucleotidase SurE (Pseudomonas aeruginosa (strain LESB58)).